The following is a 53-amino-acid chain: uncharacterized protein (53 aa).

Residues 13–35 form a helical membrane-spanning segment; sequence FLLHSFTFPIAHCPSFSWASFFF.

It is found in the membrane. This is an uncharacterized protein from Saccharomyces cerevisiae (strain ATCC 204508 / S288c) (Baker's yeast).